Here is a 184-residue protein sequence, read N- to C-terminus: Protein MEH1 (184 aa).

Glycine 2 carries N-myristoyl glycine lipidation. 2 S-palmitoyl cysteine lipidation sites follow: cysteine 7 and cysteine 8. Residues 30–71 adopt a coiled-coil conformation; the sequence is QGNANDEYDAEQMRLKEHEHEQKLLAREQELRDIVANTNDKL. A disordered region spans residues 89–147; that stretch reads LQEALDKRQQEEGGDSREDERSAGDDNLSGHSVPSSGSAQATTHQTAPRTNTFTLLTSP. The segment covering 92–112 has biased composition (basic and acidic residues); it reads ALDKRQQEEGGDSREDERSAG. The span at 117 to 147 shows a compositional bias: polar residues; the sequence is SGHSVPSSGSAQATTHQTAPRTNTFTLLTSP. A phosphoserine mark is found at serine 146 and serine 149.

As to quaternary structure, component of the GSE complex composed of GTR1, GTR2, SLM4, MEH1 and LTV1. Component of the EGO complex, at least composed of GTR2, SLM4 and MEH1.

The protein localises to the vacuole membrane. Its function is as follows. Component of the GSE complex, a GTPase complex required for intracellular sorting of GAP1 out of the endosome. Component of the EGO complex, a complex involved in the regulation of microautophagy. In Saccharomyces cerevisiae (strain ATCC 204508 / S288c) (Baker's yeast), this protein is Protein MEH1 (MEH1).